Here is a 222-residue protein sequence, read N- to C-terminus: Formimidoylglutamase (222 aa).

Mn(2+)-binding residues include His-34, Asp-59, His-61, Asp-63, Asp-150, and Asp-152.

It belongs to the arginase family. Mn(2+) is required as a cofactor.

It catalyses the reaction N-formimidoyl-L-glutamate + H2O = formamide + L-glutamate. The protein operates within amino-acid degradation; L-histidine degradation into L-glutamate; L-glutamate from N-formimidoyl-L-glutamate (hydrolase route): step 1/1. In terms of biological role, catalyzes the conversion of N-formimidoyl-L-glutamate to L-glutamate and formamide. In Klebsiella aerogenes (Enterobacter aerogenes), this protein is Formimidoylglutamase (hutG).